The primary structure comprises 234 residues: Triosephosphate isomerase (234 aa).

8 to 10 (NFK) is a substrate binding site. The active-site Electrophile is His-90. Glu-159 (proton acceptor) is an active-site residue. Residues Gly-165 and Ser-197 each coordinate substrate.

It belongs to the triosephosphate isomerase family. In terms of assembly, homodimer.

It localises to the cytoplasm. It carries out the reaction D-glyceraldehyde 3-phosphate = dihydroxyacetone phosphate. The protein operates within carbohydrate biosynthesis; gluconeogenesis. It participates in carbohydrate degradation; glycolysis; D-glyceraldehyde 3-phosphate from glycerone phosphate: step 1/1. Involved in the gluconeogenesis. Catalyzes stereospecifically the conversion of dihydroxyacetone phosphate (DHAP) to D-glyceraldehyde-3-phosphate (G3P). This Helicobacter pylori (strain P12) protein is Triosephosphate isomerase.